The following is a 570-amino-acid chain: Enhancer of polycomb-like protein 1 (570 aa).

The segment at 541–570 (ALNNLNSGQTSGQTMGSNPGPGAIAPTPET) is disordered. The segment covering 543–557 (NNLNSGQTSGQTMGS) has biased composition (polar residues).

This sequence belongs to the enhancer of polycomb family. In terms of assembly, component of the NuA4 histone acetyltransferase complex.

It is found in the nucleus. Its function is as follows. Component of the NuA4 histone acetyltransferase complex which is involved in transcriptional activation of selected genes principally by acetylation of nucleosomal histone H4 and H2A. The NuA4 complex is also involved in DNA repair. Involved in gene silencing by neighboring heterochromatin, blockage of the silencing spreading along the chromosome, and required for cell cycle progression through G2/M. The polypeptide is Enhancer of polycomb-like protein 1 (epl1) (Emericella nidulans (strain FGSC A4 / ATCC 38163 / CBS 112.46 / NRRL 194 / M139) (Aspergillus nidulans)).